The sequence spans 535 residues: Light-independent protochlorophyllide reductase subunit B (535 aa).

Aspartate 36 lines the [4Fe-4S] cluster pocket. The active-site Proton donor is the aspartate 292. 428–429 (GL) serves as a coordination point for substrate. Residues 447–483 (SDDAAKAEPDQPVSNAHGHTESKTVSQGEPIASDEGG) are disordered.

Belongs to the ChlB/BchB/BchZ family. As to quaternary structure, protochlorophyllide reductase is composed of three subunits; BchL, BchN and BchB. Forms a heterotetramer of two BchB and two BchN subunits. Requires [4Fe-4S] cluster as cofactor.

The enzyme catalyses chlorophyllide a + oxidized 2[4Fe-4S]-[ferredoxin] + 2 ADP + 2 phosphate = protochlorophyllide a + reduced 2[4Fe-4S]-[ferredoxin] + 2 ATP + 2 H2O. Its pathway is porphyrin-containing compound metabolism; bacteriochlorophyll biosynthesis (light-independent). Functionally, component of the dark-operative protochlorophyllide reductase (DPOR) that uses Mg-ATP and reduced ferredoxin to reduce ring D of protochlorophyllide (Pchlide) to form chlorophyllide a (Chlide). This reaction is light-independent. The NB-protein (BchN-BchB) is the catalytic component of the complex. This chain is Light-independent protochlorophyllide reductase subunit B, found in Chlorobium phaeobacteroides (strain DSM 266 / SMG 266 / 2430).